Reading from the N-terminus, the 418-residue chain is MTLLALGINHKTAPVSLRERVTFSPDTLDQALDSLLAQPMVQGGVVLSTCNRTELYLSVEEQDNLQEALIRWLCDYHNLNEDDLRNSLYWHQDNDAVSHLMRVASGLDSLVLGEPQILGQVKKAFADSQKGHLNASALERMFQKSFSVAKRVRTETDIGASAVSVAFAACTLARQIFESLSTVTVLLVGAGETIELVARHLREHKVQKMIIANRTRERAQALADEVGAEVISLSDIDARLQDADIIISSTASPLPIIGKGMVERALKSRRNQPMLLVDIAVPRDVEPEVGKLANAYLYSVDDLQSIISHNLAQRQAAAVEAETIVEQEASEFMAWLRAQGASETIREYRSQSEQIRDELTTKALSALQQGGDAQAILQDLAWKLTNRLIHAPTKSLQQAARDGDDERLNILRDSLGLE.

Substrate contacts are provided by residues 49–52, serine 109, 114–116, and glutamine 120; these read TCNR and EPQ. Residue cysteine 50 is the Nucleophile of the active site. Residue 189–194 coordinates NADP(+); the sequence is GAGETI.

The protein belongs to the glutamyl-tRNA reductase family. In terms of assembly, homodimer.

The catalysed reaction is (S)-4-amino-5-oxopentanoate + tRNA(Glu) + NADP(+) = L-glutamyl-tRNA(Glu) + NADPH + H(+). It functions in the pathway porphyrin-containing compound metabolism; protoporphyrin-IX biosynthesis; 5-aminolevulinate from L-glutamyl-tRNA(Glu): step 1/2. In terms of biological role, catalyzes the NADPH-dependent reduction of glutamyl-tRNA(Glu) to glutamate 1-semialdehyde (GSA). The polypeptide is Glutamyl-tRNA reductase (Salmonella heidelberg (strain SL476)).